Here is an 815-residue protein sequence, read N- to C-terminus: TBC1 domain family member 5 (815 aa).

S44 is subject to Phosphoserine. Residues M56 to V64 form a required for interaction with retromer; involved in interaction with ATG8 family proteins region. The LIR 1 motif lies at K57–L62. One can recognise a Rab-GAP TBC domain in the interval L81–S359. R448 is modified (asymmetric dimethylarginine; alternate). R448 is modified (omega-N-methylarginine; alternate). S460 bears the Phosphoserine mark. Positions P475–S591 are disordered. Composition is skewed to low complexity over residues P483 to S492 and Q510 to Q539. S546, S563, S565, S568, S578, and S608 each carry phosphoserine. Residues S556–S568 are compositionally biased toward low complexity. Disordered regions lie at residues S702 to F733 and Q754 to I815. Residues Q754–K765 show a composition bias toward polar residues. The segment covering P783 to S796 has biased composition (low complexity). Residues S805–I809 carry the LIR 2 motif. A required for interaction with ATG8 family proteins region spans residues G806–S811. S811 is modified (phosphoserine).

As to quaternary structure, interacts with MAP1LC3A, MAP1LC3B, MAP1LC3C, GABARAP, GABARAPL1, GABARAPL2. Interacts with VPS29 and VPS35; indicative for an association with retromer CSC subcomplex. MAP1LC3A and VPS29 compete for binding to TBC1D5. Interacts with AP2M1; indicative for an association with the AP2 complex. Interacts with ULK1 and ATG13 (phosphorylated); indicative for an association with the activated ULK1-ATG13-FIP200 complex. Interacts with ATG9A; the interactions seems to be restricted to the AP2-clathrin-associated fraction of ATG9A.

Its subcellular location is the endosome membrane. It localises to the cytoplasmic vesicle. The protein localises to the autophagosome. Functionally, may act as a GTPase-activating protein for Rab family protein(s). May act as a GAP for RAB7A. Can displace RAB7A and retromer CSC subcomplex from the endosomal membrane to the cytosol; at least retromer displacement seems to require its catalytic activity. Required for retrograde transport of cargo proteins from endosomes to the trans-Golgi network (TGN); the function seems to require its catalytic activity. Involved in regulation of autophagy. May act as a molecular switch between endosomal and autophagosomal transport and is involved in reprogramming vesicle trafficking upon autophagy induction. Involved in the trafficking of ATG9A upon activation of autophagy. May regulate the recruitment of ATG9A-AP2-containing vesicles to autophagic membranes. This chain is TBC1 domain family member 5 (Tbc1d5), found in Mus musculus (Mouse).